Here is a 229-residue protein sequence, read N- to C-terminus: uncharacterized protein (229 aa).

The 68-residue stretch at 2-69 (QRLAKLISNA…KSRLWIYYKP (68 aa)) folds into the S4 RNA-binding domain. The active-site Nucleophile is the D102.

This sequence belongs to the pseudouridine synthase RsuA family.

It catalyses the reaction a uridine in RNA = a pseudouridine in RNA. This is an uncharacterized protein from Rickettsia bellii (strain RML369-C).